The following is a 142-amino-acid chain: Coiled-coil-helix-coiled-coil-helix domain-containing protein 10, mitochondrial (142 aa).

Residues 1 to 16 constitute a mitochondrion transit peptide; the sequence is MPRGSRSAASRPASRP. Low complexity predominate over residues 1-20; sequence MPRGSRSAASRPASRPAAPS. Disordered regions lie at residues 1–45 and 68–97; these read MPRG…PGLM and ALTG…PQPL. The segment covering 21–39 has biased composition (pro residues); it reads AHPPAHPPPSAAAPAPAPS. The segment covering 80 to 90 has biased composition (low complexity); the sequence is PSQPAVQQAPT. The CHCH domain occupies 99-140; that stretch reads MGPCAYEIRQFLDCSTTQSDLSLCEGFSEALKQCKYYHGLSS. 2 short sequence motifs (cx9C motif) span residues 102-112 and 122-132; these read CAYEIRQFLDC and CEGFSEALKQC. Cystine bridges form between Cys102–Cys132 and Cys112–Cys122.

As to expression, ubiquitously expressed. Higher expression is observed in heart and liver.

It is found in the mitochondrion intermembrane space. Its function is as follows. May be involved in the maintenance of mitochondrial organization and mitochondrial cristae structure. In Homo sapiens (Human), this protein is Coiled-coil-helix-coiled-coil-helix domain-containing protein 10, mitochondrial (CHCHD10).